The chain runs to 413 residues: Intracellular hyaluronan-binding protein 4 (413 aa).

A phosphoserine mark is found at Ser7 and Ser36. Residues 40–64 (DILREAERRRQQQLQRKRRDEAAAA) are a coiled coil. Positions 42–206 (LREAERRRQQ…RGGPGNRVFD (165 aa)) are disordered. Low complexity predominate over residues 62–82 (AAAAGAGPRGGRSPAGASGHR). Arg70 carries the post-translational modification Omega-N-methylarginine. The residue at position 74 (Ser74) is a Phosphoserine. Residues 87–97 (GRRESQKERKS) are compositionally biased toward basic and acidic residues. At Ser108 the chain carries Phosphoserine. A compositionally biased stretch (basic and acidic residues) spans 139-182 (MLERAERRSYREYRPYETERQADFTAEKFPDEKPGDRFDRDRPL). Positions 184–201 (GRGGPRGGMRGRGRGGPG) are enriched in gly residues. Glycyl lysine isopeptide (Lys-Gly) (interchain with G-Cter in SUMO1); alternate cross-links involve residues Lys213 and Lys276. Residues Lys213 and Lys276 each participate in a glycyl lysine isopeptide (Lys-Gly) (interchain with G-Cter in SUMO2); alternate cross-link. Residues 227–320 (VRTEDNMGGC…IRKPESTVPS (94 aa)) are disordered. The span at 294-315 (DEWKNLQEQTRPKPEFNIRKPE) shows a compositional bias: basic and acidic residues. Lys336 participates in a covalent cross-link: Glycyl lysine isopeptide (Lys-Gly) (interchain with G-Cter in SUMO1); alternate. Lys336 participates in a covalent cross-link: Glycyl lysine isopeptide (Lys-Gly) (interchain with G-Cter in SUMO2); alternate. A phosphothreonine; by PKC mark is found at Thr354 and Thr375. The tract at residues 360-413 (NFGNLPRPGRGARGGTRGGRGRIRRAENYGPRAEVVMQDVAPNPDDPEDFPALS) is disordered. Residues 404–413 (DDPEDFPALS) show a composition bias toward acidic residues.

Belongs to the SERBP1-HABP4 family. As to quaternary structure, associates with ribosomes; promoting ribosome stabilization. Interacts with EEF2/eEF2; promoting ribosome stabilization. Interacts with FMR1. Interacts with FXR1 and FXR2. Interacts with CHD3 (via C-terminus). Interacts (via C-terminus) with RACK1. Interacts with p53/TP53. Interacts (via N-terminus) with SRSF9; this interaction is direct. Interacts with SYNCRIP; this interaction is direct. Interacts with MEF2C (via N-terminus); this interaction decreases DNA-binding activity of MEF2C in myocardial cells in response to mechanical stress. Interacts with PRMT1 (via N-terminus). Interacts with SPIN1. Methylated. Methylation is decreased by phorbol 12-myristate 13-acetate (PMA)-activated PKC, in vitro. Post-translationally, phosphorylated by phorbol 12-myristate 13-acetate (PMA)-activated PKC isoforms at Thr-354 and Thr-375. In terms of tissue distribution, highly expressed in brain, heart, and kidney, and moderately expressed in skeletal muscle. Also expressed in a variety of tumor cell lines and in activated but not resting leukocytes.

The protein resides in the nucleus. It localises to the cytoplasm. Its subcellular location is the stress granule. It is found in the sarcoplasm. The protein localises to the nuclear body. The protein resides in the nucleolus. It localises to the nucleus speckle. Its subcellular location is the cajal body. It is found in the gem. In terms of biological role, ribosome-binding protein that promotes ribosome hibernation, a process during which ribosomes are stabilized in an inactive state and preserved from proteasomal degradation. Acts via its association with EEF2/eEF2 factor at the A-site of the ribosome, promoting ribosome stabilization in an inactive state compatible with storage. Plays a key role in ribosome hibernation in the mature oocyte by promoting ribosome stabilization. Ribosomes, which are produced in large quantities during oogenesis, are stored and translationally repressed in the oocyte and early embryo. Also binds RNA, regulating transcription and pre-mRNA splicing. Binds (via C-terminus) to poly(U) RNA. Seems to play a role in PML-nuclear bodies formation. Negatively regulates DNA-binding activity of the transcription factor MEF2C in myocardial cells in response to mechanical stress. This chain is Intracellular hyaluronan-binding protein 4, found in Homo sapiens (Human).